The following is an 81-amino-acid chain: MKTLLLTLVVVTIVCLDLGYTLKCNQLIPIASKTCPAGKNLCYKMFMMSDLTIPVKRGCIDVCPKNSLLVKYVCCNTDRCN.

A signal peptide spans 1–21 (MKTLLLTLVVVTIVCLDLGYT). 4 cysteine pairs are disulfide-bonded: cysteine 24/cysteine 42, cysteine 35/cysteine 59, cysteine 63/cysteine 74, and cysteine 75/cysteine 80.

This sequence belongs to the three-finger toxin family. Short-chain subfamily. Type IA cytotoxin sub-subfamily. As to quaternary structure, monomer in solution; Homodimer and oligomer in the presence of negatively charged lipids forming a pore with a size ranging between 20 and 30 Angstroms. In terms of tissue distribution, expressed by the venom gland.

It is found in the secreted. The protein localises to the target cell membrane. Functionally, shows cytolytic activity on many different cells by forming pore in lipid membranes. In vivo, increases heart rate or kills the animal by cardiac arrest. In addition, it binds to heparin with high affinity, interacts with Kv channel-interacting protein 1 (KCNIP1) in a calcium-independent manner, and binds to integrin alpha-V/beta-3 (ITGAV/ITGB3) with moderate affinity. In Naja atra (Chinese cobra), this protein is Cytotoxin 1d/1e.